The chain runs to 562 residues: Arginine--tRNA ligase 2 (562 aa).

The 'HIGH' region signature appears at 122–132 (PNIAKPFSMGH).

It belongs to the class-I aminoacyl-tRNA synthetase family. As to quaternary structure, monomer.

The protein localises to the cytoplasm. The catalysed reaction is tRNA(Arg) + L-arginine + ATP = L-arginyl-tRNA(Arg) + AMP + diphosphate. The sequence is that of Arginine--tRNA ligase 2 (argS2) from Bacillus anthracis.